A 202-amino-acid chain; its full sequence is Ras-related protein Rab-24 (202 aa).

GTP is bound at residue 14 to 21 (GYASVGKT). The Effector region signature appears at 35–43 (THTTIGGAF). GTP-binding positions include 61 to 65 (DTAGT) and 118 to 121 (TKLD). 2 S-geranylgeranyl cysteine lipidation sites follow: Cys-201 and Cys-202.

It belongs to the small GTPase superfamily. Rab family.

It localises to the endoplasmic reticulum-Golgi intermediate compartment. Its subcellular location is the endosome. The protein resides in the endoplasmic reticulum. The protein localises to the golgi apparatus. It is found in the membrane. May be involved in autophagy-related processes. The protein is Ras-related protein Rab-24 (rab24) of Dictyostelium discoideum (Social amoeba).